Here is a 534-residue protein sequence, read N- to C-terminus: Probable inorganic phosphate transporter 1-8 (534 aa).

Residues 1-21 (MPIKVLSSLDVARTQWYHFKA) lie on the Cytoplasmic side of the membrane. A helical membrane pass occupies residues 22-42 (IIVAGMGLFTDAYDLFCIAPV). The Extracellular segment spans residues 43–61 (MKMISHVYYNGDSINTAVL). A helical transmembrane segment spans residues 62-82 (STSYAIALLGTATGQLVFGYL). At 83 to 90 (GDRVGRRR) the chain is on the cytoplasmic side. Residues 91–111 (VYGLCLIIMILSSFGCGFSVC) traverse the membrane as a helical segment. Over 112 to 123 (TTRRSCVMVSLG) the chain is Extracellular. A helical transmembrane segment spans residues 124-144 (FFRFFLGLGIGGDYPLSATIM). Residues 145–153 (SEFANKRTR) are Cytoplasmic-facing. A helical transmembrane segment spans residues 154–174 (GAFIAAVFSMQGLGILVSSAV). Residues 175 to 199 (TMAVCVAFKRSGGGLEVDAAAPTEA) are Extracellular-facing. Residues 200–220 (DLAWRLILMIGALPAALTFYW) form a helical membrane-spanning segment. Over 221–281 (RMLMPETARY…KLFSRCFFRL (61 aa)) the chain is Cytoplasmic. A helical transmembrane segment spans residues 282 to 302 (HGRDLFAASFNWFLVDIVFYT). At 303–333 (SNLLLSHIFSHYSKKPSTAENVYDAAFEVAE) the chain is on the extracellular side. Residues 334 to 354 (LGAIIAACSTIPGYWFTVYFI) traverse the membrane as a helical segment. The Cytoplasmic segment spans residues 355 to 361 (DKIGRVK). The helical transmembrane segment at 362-382 (IQIMGFFFMAVIYLVAGIPYS) threads the bilayer. Residues 383–396 (WYWSKHEHNNKGFM) are Extracellular-facing. Residues 397–417 (VLYGLVFFFCNFGPNTTTFII) traverse the membrane as a helical segment. The Cytoplasmic portion of the chain corresponds to 418–431 (PAEHFPARFRSTCH). A helical transmembrane segment spans residues 432 to 452 (GISGAAGKLGAIVGTVGFLWA). Topologically, residues 453 to 472 (TKKMESDDKNQIYPEVNRMR) are extracellular. A helical membrane pass occupies residues 473–493 (IAFLILGGVCIAGILVTYFFT). Residues 494–534 (KETMGRSLEENEHDQDNNAESEDEPQIVDGQSSVSTLLQTR) are Cytoplasmic-facing. Residues 501–534 (LEENEHDQDNNAESEDEPQIVDGQSSVSTLLQTR) form a disordered region. Over residues 510 to 519 (NNAESEDEPQ) the composition is skewed to acidic residues. Ser514 bears the Phosphoserine mark. Over residues 522-534 (DGQSSVSTLLQTR) the composition is skewed to polar residues.

The protein belongs to the major facilitator superfamily. Phosphate:H(+) symporter (TC 2.A.1.9) family. In terms of tissue distribution, in roots.

Its subcellular location is the membrane. In terms of biological role, high-affinity transporter for external inorganic phosphate. The sequence is that of Probable inorganic phosphate transporter 1-8 (PHT1-8) from Arabidopsis thaliana (Mouse-ear cress).